The following is a 627-amino-acid chain: DEAD-box ATP-dependent RNA helicase 35A (627 aa).

Composition is skewed to low complexity over residues 1-15 (MAAA…AAAA) and 52-61 (SSSAAEAASD). Disordered regions lie at residues 1–23 (MAAA…EDNY) and 40–85 (LRRL…LEAS). Positions 62 to 72 (LPPPPPPPPNQ) are enriched in pro residues. The short motif at 182–210 (RDFRDLRLPEPMLRKLREKGIVQPTPIQV) is the Q motif element. The region spanning 213 to 397 (LPVVLSGRDM…KSALVKPVIV (185 aa)) is the Helicase ATP-binding domain. An ATP-binding site is contributed by 226 to 233 (AFTGSGKT). Residues 345–348 (DEAD) carry the DEAD box motif. Positions 408–568 (DVIQEVEYVK…RIPPVLAELN (161 aa)) constitute a Helicase C-terminal domain. Residues 584-601 (KGCAYCGGLGHRVTDCPK) form a CCHC-type zinc finger.

The protein belongs to the DEAD box helicase family. DDX41 subfamily.

It carries out the reaction ATP + H2O = ADP + phosphate + H(+). This Oryza sativa subsp. japonica (Rice) protein is DEAD-box ATP-dependent RNA helicase 35A.